The following is a 467-amino-acid chain: Probable apyrase 2 (467 aa).

Topologically, residues 1-25 are cytoplasmic; that stretch reads MRRYSALPGGGARPDTLADRLHRYR. Residues 26 to 46 form a helical; Signal-anchor for type II membrane protein membrane-spanning segment; sequence GVLLVILAPLALVSLVLLLMP. Residues 47 to 467 lie on the Extracellular side of the membrane; sequence RSPASSSAAA…PLGSAIEVAS (421 aa). 70 to 80 provides a ligand contact to ATP; the sequence is VIFDAGSSGSR. Glutamate 192 acts as the Proton acceptor in catalysis. Residue 216–226 participates in ATP binding; it reads GVVDLGGGSVQ.

The protein belongs to the GDA1/CD39 NTPase family. Ca(2+) is required as a cofactor.

The protein localises to the membrane. It carries out the reaction a ribonucleoside 5'-triphosphate + 2 H2O = a ribonucleoside 5'-phosphate + 2 phosphate + 2 H(+). Catalyzes the hydrolysis of phosphoanhydride bonds of nucleoside tri- and di-phosphates. This Oryza sativa subsp. japonica (Rice) protein is Probable apyrase 2 (APY2).